A 161-amino-acid chain; its full sequence is Disulfide bond formation protein B (161 aa).

Residues 1 to 8 (MQANSRAY) lie on the Cytoplasmic side of the membrane. The helical transmembrane segment at 9-25 (FLLIALVSFGLVGVALY) threads the bilayer. The Periplasmic portion of the chain corresponds to 26–43 (LQFEKGYQPCPLCVMQRF). A disulfide bridge links C35 with C38. A helical membrane pass occupies residues 44 to 58 (AFIGIGIFSLLAAVA). Topologically, residues 59–63 (QNTRS) are cytoplasmic. A helical transmembrane segment spans residues 64-81 (LWQGLGMLSGIAGIAVAV). The Periplasmic portion of the chain corresponds to 82–136 (YHVSLLLNPKASCGIDPLENWVNALPTAKALPQVFYADGLCTAPLPPVLGLSVPA). An intrachain disulfide couples C94 to C122. Residues 137-155 (WSLIWLFILTLTLAVGLIR) traverse the membrane as a helical segment. Residues 156-161 (REKNFR) are Cytoplasmic-facing.

This sequence belongs to the DsbB family.

The protein resides in the cell inner membrane. Functionally, required for disulfide bond formation in some periplasmic proteins. Acts by oxidizing the DsbA protein. The protein is Disulfide bond formation protein B of Cupriavidus necator (strain ATCC 17699 / DSM 428 / KCTC 22496 / NCIMB 10442 / H16 / Stanier 337) (Ralstonia eutropha).